Consider the following 500-residue polypeptide: Protein dcd1B (500 aa).

An N-terminal signal peptide occupies residues 1-20; the sequence is MNLIKLFIICCLLISITVKS. N-linked (GlcNAc...) asparagine glycans are attached at residues N284, N331, N441, N459, N474, and N475. The segment at 464-500 is disordered; it reads FSEQPPLPPPNNSSSSDSNSNSNSDSSSSSDSNSNSN. The span at 475 to 500 shows a compositional bias: low complexity; the sequence is NSSSSDSNSNSNSDSSSSSDSNSNSN.

The protein localises to the secreted. This chain is Protein dcd1B (dcd1B), found in Dictyostelium discoideum (Social amoeba).